The sequence spans 95 residues: Aspartyl/glutamyl-tRNA(Asn/Gln) amidotransferase subunit C (95 aa).

It belongs to the GatC family. In terms of assembly, heterotrimer of A, B and C subunits.

The catalysed reaction is L-glutamyl-tRNA(Gln) + L-glutamine + ATP + H2O = L-glutaminyl-tRNA(Gln) + L-glutamate + ADP + phosphate + H(+). The enzyme catalyses L-aspartyl-tRNA(Asn) + L-glutamine + ATP + H2O = L-asparaginyl-tRNA(Asn) + L-glutamate + ADP + phosphate + 2 H(+). In terms of biological role, allows the formation of correctly charged Asn-tRNA(Asn) or Gln-tRNA(Gln) through the transamidation of misacylated Asp-tRNA(Asn) or Glu-tRNA(Gln) in organisms which lack either or both of asparaginyl-tRNA or glutaminyl-tRNA synthetases. The reaction takes place in the presence of glutamine and ATP through an activated phospho-Asp-tRNA(Asn) or phospho-Glu-tRNA(Gln). This is Aspartyl/glutamyl-tRNA(Asn/Gln) amidotransferase subunit C from Ectopseudomonas mendocina (strain ymp) (Pseudomonas mendocina).